Here is a 419-residue protein sequence, read N- to C-terminus: L-rhamnose isomerase (419 aa).

Residues His262, Asp294, and Asp296 each contribute to the Mn(2+) site.

Belongs to the rhamnose isomerase family. Homotetramer. Mn(2+) is required as a cofactor.

The protein localises to the cytoplasm. It catalyses the reaction L-rhamnopyranose = L-rhamnulose. It participates in carbohydrate degradation; L-rhamnose degradation; glycerone phosphate from L-rhamnose: step 1/3. Catalyzes the interconversion of L-rhamnose and L-rhamnulose. The polypeptide is L-rhamnose isomerase (Shigella flexneri serotype 5b (strain 8401)).